The primary structure comprises 187 residues: Ribosome maturation factor RimM (187 aa).

One can recognise a PRC barrel domain in the interval 95 to 178 (DEDEFFYADL…GLVEDKDESL (84 aa)).

Belongs to the RimM family. Binds ribosomal protein uS19.

It localises to the cytoplasm. Its function is as follows. An accessory protein needed during the final step in the assembly of 30S ribosomal subunit, possibly for assembly of the head region. Essential for efficient processing of 16S rRNA. May be needed both before and after RbfA during the maturation of 16S rRNA. It has affinity for free ribosomal 30S subunits but not for 70S ribosomes. This chain is Ribosome maturation factor RimM, found in Sinorhizobium fredii (strain NBRC 101917 / NGR234).